A 576-amino-acid polypeptide reads, in one-letter code: Lysine--tRNA ligase (576 aa).

Glu-412 and Glu-419 together coordinate Mg(2+).

Belongs to the class-II aminoacyl-tRNA synthetase family. As to quaternary structure, homodimer. Mg(2+) is required as a cofactor.

The protein localises to the cytoplasm. It carries out the reaction tRNA(Lys) + L-lysine + ATP = L-lysyl-tRNA(Lys) + AMP + diphosphate. In Phocaeicola vulgatus (strain ATCC 8482 / DSM 1447 / JCM 5826 / CCUG 4940 / NBRC 14291 / NCTC 11154) (Bacteroides vulgatus), this protein is Lysine--tRNA ligase.